Reading from the N-terminus, the 487-residue chain is Serine/threonine-protein kinase 4 (487 aa).

At Met1 the chain carries N-acetylmethionine. Residue Thr3 is modified to Phosphothreonine. The 252-residue stretch at 30–281 folds into the Protein kinase domain; sequence FDVLEKLGEG…ATQLLQHPFV (252 aa). ATP contacts are provided by residues 36–44 and Lys59; that span reads LGEGSYGSV. The active-site Proton acceptor is Asp149. Thr183 bears the Phosphothreonine; by autocatalysis mark. The residue at position 265 (Ser265) is a Phosphoserine. Residues 290–310 adopt a coiled-coil conformation; that stretch reads LRDLINEAMDVKLKRQESQQR. Basic and acidic residues predominate over residues 303–312; that stretch reads KRQESQQREV. Positions 303 to 332 are disordered; sequence KRQESQQREVDQDDEENSEEDEMDSGTMVR. The span at 313-326 shows a compositional bias: acidic residues; it reads DQDDEENSEEDEMD. Residue Ser320 is modified to Phosphoserine. Thr340 and Thr367 each carry phosphothreonine. Thr387 carries the post-translational modification Phosphothreonine; by PKB/AKT1. Ser410 and Ser414 each carry phosphoserine. Residue Tyr433 is modified to Phosphotyrosine. One can recognise an SARAH domain in the interval 433–480; sequence YEFLKSWTVEDLQKRLLALDPMMEQEIEEIRQKYQSKRQPILDAIEAK.

It belongs to the protein kinase superfamily. STE Ser/Thr protein kinase family. STE20 subfamily. As to quaternary structure, homodimer; mediated via the coiled-coil region. Interacts with NORE1, which inhibits autoactivation. Interacts with and stabilizes SAV1. Interacts with RASSF1. Interacts with FOXO3. Interacts with RASSF2 (via SARAH domain). Interacts with AR, PKB/AKT1, TNNI3 and SIRT1. Interacts with DLG5 (via PDZ domain 3). Interacts with MARK3 in the presence of DLG5. Interacts with SCRIB in the presence of DLG5. The cofactor is Mg(2+). Autophosphorylated on serine and threonine residues. Phosphorylation at Thr-387 by PKB/AKT1, leads to inhibition of its: kinase activity, nuclear translocation and autophosphorylation at Thr-183. It also diminishes its cleavage by caspases and its ability to phosphorylate FOXO3. Post-translationally, proteolytically cleaved by caspase-3 during apoptosis at Asp-326 and Asp-349 resulting in a 37 kDa or a 39 kDa subunit respectively. The 39 kDa subunit is further cleaved into the 37 kDa form. Proteolytic cleavage results in kinase activation and nuclear translocation of the truncated form (MST1/N). It is less likely that cleavage at Asp-349 is a prerequisite for activation as this site is not conserved in the murine ortholog. Expressed in prostate cancer and levels increase from the normal to the malignant state (at protein level). Ubiquitously expressed.

The protein localises to the cytoplasm. It is found in the nucleus. It catalyses the reaction L-seryl-[protein] + ATP = O-phospho-L-seryl-[protein] + ADP + H(+). The catalysed reaction is L-threonyl-[protein] + ATP = O-phospho-L-threonyl-[protein] + ADP + H(+). Its activity is regulated as follows. Inhibited by the C-terminal non-catalytic region. Activated by caspase-cleavage. Full activation also requires homodimerization and autophosphorylation of Thr-183. Activated by RASSF1 which acts by preventing its dephosphorylation. Stress-activated, pro-apoptotic kinase which, following caspase-cleavage, enters the nucleus and induces chromatin condensation followed by internucleosomal DNA fragmentation. Key component of the Hippo signaling pathway which plays a pivotal role in organ size control and tumor suppression by restricting proliferation and promoting apoptosis. The core of this pathway is composed of a kinase cascade wherein STK3/MST2 and STK4/MST1, in complex with its regulatory protein SAV1, phosphorylates and activates LATS1/2 in complex with its regulatory protein MOB1, which in turn phosphorylates and inactivates YAP1 oncoprotein and WWTR1/TAZ. Phosphorylation of YAP1 by LATS2 inhibits its translocation into the nucleus to regulate cellular genes important for cell proliferation, cell death, and cell migration. STK3/MST2 and STK4/MST1 are required to repress proliferation of mature hepatocytes, to prevent activation of facultative adult liver stem cells (oval cells), and to inhibit tumor formation. Phosphorylates 'Ser-14' of histone H2B (H2BS14ph) during apoptosis. Phosphorylates FOXO3 upon oxidative stress, which results in its nuclear translocation and cell death initiation. Phosphorylates MOBKL1A, MOBKL1B and RASSF2. Phosphorylates TNNI3 (cardiac Tn-I) and alters its binding affinity to TNNC1 (cardiac Tn-C) and TNNT2 (cardiac Tn-T). Phosphorylates FOXO1 on 'Ser-212' and regulates its activation and stimulates transcription of PMAIP1 in a FOXO1-dependent manner. Phosphorylates SIRT1 and inhibits SIRT1-mediated p53/TP53 deacetylation, thereby promoting p53/TP53 dependent transcription and apoptosis upon DNA damage. Acts as an inhibitor of PKB/AKT1. Phosphorylates AR on 'Ser-650' and suppresses its activity by intersecting with PKB/AKT1 signaling and antagonizing formation of AR-chromatin complexes. The polypeptide is Serine/threonine-protein kinase 4 (Homo sapiens (Human)).